The sequence spans 340 residues: Adenosine receptor A2b (340 aa).

The Extracellular portion of the chain corresponds to 1–6 (MNTMKT). The chain crosses the membrane as a helical span at residues 7–31 (TYIVLELIIAVLSIAGNVLVCWAVA). Residues 32–41 (INSTLKNATN) lie on the Cytoplasmic side of the membrane. A helical transmembrane segment spans residues 42-65 (YFLVSLAVADIAVGLLAIPFAITI). Residues 66–76 (SIGFQVDFHSC) lie on the Extracellular side of the membrane. A disulfide bridge links C76 with C171. The chain crosses the membrane as a helical span at residues 77–99 (LFFACFVLVLTQSSIFSLLAVAI). Residues 100–119 (DRYLAIKIPLRYNSLVTGKR) lie on the Cytoplasmic side of the membrane. Residues 120-142 (ARGLIAVLWLLSFVIGLTPLMGW) traverse the membrane as a helical segment. Topologically, residues 143 to 178 (NKAMSGCPNSTNETGADHGAGHHGCFISCLFENVVT) are extracellular. N151 and N154 each carry an N-linked (GlcNAc...) asparagine glycan. Position 174 (E174) interacts with adenosine. The chain crosses the membrane as a helical span at residues 179–203 (MSYMVYFNFFGCVLLPLIIMLGIYI). The Cytoplasmic portion of the chain corresponds to 204–235 (KIFMVACKQLHQIELMGNSRTTLQKEVHAAKS). A helical transmembrane segment spans residues 236–259 (LAIIVGLFAFCWLPLHILNCITHF). N254 is a binding site for adenosine. The Extracellular portion of the chain corresponds to 260-267 (HEEFSKSK). Residues 268 to 291 (PEWVMYVAIILSHANSVINPIIYA) traverse the membrane as a helical segment. Residues S279 and H280 each contribute to the adenosine site. Residues 292–340 (YRIRDFRYTFHKIISKILCKTDDFPKCTTDNNQHLTVTNVNAPAASVTI) are Cytoplasmic-facing. C310 carries S-palmitoyl cysteine lipidation.

The protein belongs to the G-protein coupled receptor 1 family.

The protein resides in the cell membrane. Functionally, receptor for adenosine. The activity of this receptor is mediated by G proteins which activate adenylyl cyclase. This chain is Adenosine receptor A2b (ADORA2B), found in Gallus gallus (Chicken).